The primary structure comprises 127 residues: I-Kappa-B like protein J1 (127 aa).

ANK repeat units follow at residues 43–76 (HGNTCLHIATEEHRGRQAIWLIEKLVEYGADLDE) and 81–111 (DGDTVLHMAVKKGDYKLATWMCQQLSMRFGS).

It belongs to the polydnaviridae I-Kappa-B-like protein family.

Its function is as follows. Suppresses the host immune response through NF-kappa-B inactivation. Possesses ankyrin repeat domains required for NF-kappa-B binding but lacks the regulatory regions required for dissociation from NF-kappa-B and degradation. Therefore, prevents host NF-kappa-B release and subsequent activation. The sequence is that of I-Kappa-B like protein J1 (J2) from Microplitis demolitor (Parasitoid wasp).